The chain runs to 676 residues: DNA ligase (676 aa).

NAD(+) is bound by residues 32 to 36 (DAEYD), 81 to 82 (SL), and glutamate 113. The N6-AMP-lysine intermediate role is filled by lysine 115. The NAD(+) site is built by arginine 136, glutamate 173, lysine 291, and lysine 315. The Zn(2+) site is built by cysteine 409, cysteine 412, cysteine 427, and cysteine 433. In terms of domain architecture, BRCT spans 595–676 (SEKTYFFNKK…LNSLIRIKEQ (82 aa)).

This sequence belongs to the NAD-dependent DNA ligase family. LigA subfamily. Mg(2+) serves as cofactor. Mn(2+) is required as a cofactor.

The catalysed reaction is NAD(+) + (deoxyribonucleotide)n-3'-hydroxyl + 5'-phospho-(deoxyribonucleotide)m = (deoxyribonucleotide)n+m + AMP + beta-nicotinamide D-nucleotide.. Its function is as follows. DNA ligase that catalyzes the formation of phosphodiester linkages between 5'-phosphoryl and 3'-hydroxyl groups in double-stranded DNA using NAD as a coenzyme and as the energy source for the reaction. It is essential for DNA replication and repair of damaged DNA. In Buchnera aphidicola subsp. Acyrthosiphon pisum (strain Tuc7), this protein is DNA ligase.